A 684-amino-acid polypeptide reads, in one-letter code: Protein SEEDLING PLASTID DEVELOPMENT 1 (684 aa).

The N-terminal 78 residues, 1–78, are a transit peptide targeting the chloroplast; it reads MRALNSRLVL…FSFDVRSPSS (78 aa). Residues 33–91 form a disordered region; that stretch reads SDSSSSFRRTRGARQRIASSKSPASSPSPVRRPSDGFSFDVRSPSSDSSISSRKSPTTA. Low complexity predominate over residues 50 to 88; it reads ASSKSPASSPSPVRRPSDGFSFDVRSPSSDSSISSRKSP. An ATP-binding site is contributed by 220 to 227; the sequence is GSPGVGKT. A disordered region spans residues 651–684; the sequence is PRRSTKKTLTSSSPQKSADGSMGTTGTRLPFLKD. Over residues 657-667 the composition is skewed to low complexity; it reads KTLTSSSPQKS.

It belongs to the ycf45 family.

It localises to the plastid. The protein resides in the chloroplast membrane. The protein localises to the chloroplast envelope. Its function is as follows. Required during eoplast (a highly reduced plastid type present during the degreening and dehydration stages of seed maturation) development in embryos and early stages of eoplast redifferentiation during seedling growth. In Arabidopsis thaliana (Mouse-ear cress), this protein is Protein SEEDLING PLASTID DEVELOPMENT 1.